We begin with the raw amino-acid sequence, 169 residues long: ATP synthase subunit b (169 aa).

Residues 11 to 31 (KLPLGNMLFIIISFLVLMVIL) traverse the membrane as a helical segment.

Belongs to the ATPase B chain family. F-type ATPases have 2 components, F(1) - the catalytic core - and F(0) - the membrane proton channel. F(1) has five subunits: alpha(3), beta(3), gamma(1), delta(1), epsilon(1). F(0) has three main subunits: a(1), b(2) and c(10-14). The alpha and beta chains form an alternating ring which encloses part of the gamma chain. F(1) is attached to F(0) by a central stalk formed by the gamma and epsilon chains, while a peripheral stalk is formed by the delta and b chains.

The protein localises to the cell membrane. In terms of biological role, f(1)F(0) ATP synthase produces ATP from ADP in the presence of a proton or sodium gradient. F-type ATPases consist of two structural domains, F(1) containing the extramembraneous catalytic core and F(0) containing the membrane proton channel, linked together by a central stalk and a peripheral stalk. During catalysis, ATP synthesis in the catalytic domain of F(1) is coupled via a rotary mechanism of the central stalk subunits to proton translocation. Its function is as follows. Component of the F(0) channel, it forms part of the peripheral stalk, linking F(1) to F(0). This is ATP synthase subunit b from Leuconostoc citreum (strain KM20).